The following is a 652-amino-acid chain: Complement component C1q receptor (652 aa).

The signal sequence occupies residues 1–21 (MATSMGLLLLLLLLLTQPGAG). Over 24 to 580 (ADTEAVVCVG…QNNDGTDGQK (557 aa)) the chain is Extracellular. Positions 32–174 (VGTACYTAHS…CGSPGSPGSN (143 aa)) constitute a C-type lectin domain. 16 cysteine pairs are disulfide-bonded: Cys141-Cys165, Cys264-Cys275, Cys271-Cys285, Cys287-Cys300, Cys306-Cys317, Cys311-Cys328, Cys330-Cys343, Cys349-Cys358, Cys354-Cys367, Cys369-Cys383, Cys389-Cys400, Cys396-Cys409, Cys411-Cys425, Cys431-Cys443, Cys439-Cys452, and Cys454-Cys467. 2 EGF-like domains span residues 260-301 (PKYG…VTCA) and 302-344 (SRNP…LDCV). Asn325 carries N-linked (GlcNAc...) asparagine glycosylation. The region spanning 345–384 (DVDECQDSPCAQECVNTPGGFRCECWVGYEPGGPGEGACQ) is the EGF-like 3; calcium-binding domain. One can recognise an EGF-like 4; calcium-binding domain in the interval 385-426 (DVDECALGRSPCAQGCTNTDGSFHCSCEEGYVLAGEDGTQCQ). The region spanning 427-468 (DVDECVGPGGPLCDSLCFNTQGSFHCGCLPGWVLAPNGVSCT) is the EGF-like 5; calcium-binding domain. 2 disordered regions span residues 472-546 (VSLG…VWRE) and 553-572 (TAAS…ATQN). Residues 512–526 (ATPTTSRPSLSSDAP) show a composition bias toward polar residues. Residues 581 to 601 (LLLFYILGTVVAILLLLALAL) form a helical membrane-spanning segment. Residues 602–652 (GLLVYRKRRAKREEKKEKKPQNAADSYSWVPERAESRAMENQYSPTPGTDC) lie on the Cytoplasmic side of the membrane. The tract at residues 611 to 652 (AKREEKKEKKPQNAADSYSWVPERAESRAMENQYSPTPGTDC) is disordered. Residues 612–621 (KREEKKEKKP) are compositionally biased toward basic and acidic residues. Ser627 is modified (phosphoserine). Phosphotyrosine occurs at positions 628 and 644. Over residues 640–652 (MENQYSPTPGTDC) the composition is skewed to polar residues.

As to quaternary structure, homodimer. Interacts with C1QBP; the association may represent a cell surface C1q receptor. Interacts with surfactant protein A/SFTPA1. Interacts with multimerin-2/MMRN2. Interacts with DAG1; this interaction plays an important role in endothelial cell migration. Interacts with CBL. Interacts with IGFBP7. Interacts with VEGFR2. In terms of assembly, (Microbial infection) Interacts with hepatitis virus C/HCV core protein. N- and O-glycosylated. Post-translationally, phosphorylated on Tyr-628 and Tyr-644 by SRC; these phosphorylations promote endothelial cell adhesion and migration. In terms of tissue distribution, highly expressed in endothelial cells, platelets, cells of myeloid origin, such as monocytes and neutrophils. Not expressed in cells of lymphoid origin.

The protein resides in the cell membrane. Functionally, cell surface receptor that plays a role in various physiological processes including inflammation, phagocytosis, and cell adhesion. Plays a role in phagocytosis and enhances the uptake of apoptotic cells and immune complexes by acting as a receptor for defense collagens including surfactant protein A/SFTPA1, C1q, and mannose-binding lectin (MBL2). Plays a role in the regulation of endothelial cell function and adhesion by activating angiogenesis. Mechanistically, exerts its angiogenic function by associating with beta-dystroglycan, leading to SRC-dependent phosphorylation and subsequent recruitment of CBL. In turn, CBL provides a docking site for downstream signaling components, such as CRKL to enhance cell migration. Participates in angiogenesis also by acting as a receptor for the ECM pan-endothelial glycoprotein multimerin-2/MMRN2 and IGFBP7 ligands. Both ligands play a non-redundant role in CD93-mediated endothelial cell function. Acts as a key regulator of endothelial barrier function through modulating VEGFR2 function. This is Complement component C1q receptor (CD93) from Homo sapiens (Human).